The sequence spans 458 residues: UDP-N-acetylmuramoylalanine--D-glutamate ligase (458 aa).

ATP is bound at residue 119–125 (GSNGKTT).

Belongs to the MurCDEF family.

Its subcellular location is the cytoplasm. It carries out the reaction UDP-N-acetyl-alpha-D-muramoyl-L-alanine + D-glutamate + ATP = UDP-N-acetyl-alpha-D-muramoyl-L-alanyl-D-glutamate + ADP + phosphate + H(+). It functions in the pathway cell wall biogenesis; peptidoglycan biosynthesis. Functionally, cell wall formation. Catalyzes the addition of glutamate to the nucleotide precursor UDP-N-acetylmuramoyl-L-alanine (UMA). This chain is UDP-N-acetylmuramoylalanine--D-glutamate ligase, found in Limosilactobacillus fermentum (strain NBRC 3956 / LMG 18251) (Lactobacillus fermentum).